We begin with the raw amino-acid sequence, 726 residues long: Endo-1,4-beta-xylanase/feruloyl esterase (726 aa).

The N-terminal stretch at 1 to 19 (MKKLLVALSLIAGSLTASA) is a signal peptide. One can recognise a GH10 domain in the interval 27 to 369 (YAAGPGLKDA…KRSLQIIRDF (343 aa)). Catalysis depends on E161, which acts as the Proton donor; for xylanase activity. The Nucleophile; for xylanase activity role is filled by E280. Residues 370–726 (DAAMDNRKPK…LEKMAQSLFK (357 aa)) form a feruloyl esterase region. Catalysis depends on S629, which acts as the Nucleophile; for esterase activity.

In the N-terminal section; belongs to the glycosyl hydrolase 10 (cellulase F) family. As to quaternary structure, monomer or homodimer.

The enzyme catalyses Endohydrolysis of (1-&gt;4)-beta-D-xylosidic linkages in xylans.. It carries out the reaction feruloyl-polysaccharide + H2O = ferulate + polysaccharide.. It participates in glycan degradation; xylan degradation. Involved in degradation of plant cell wall polysaccharides. Has endo-xylanase activity towards substrates such as oat spelt xylan (OSX), acetylated xylo-oligosaccharides and acetylated xylan, producing primarily xylobiose; cannot hydrolyze xylobiose to xylose. Also has feruloyl esterase activity, releasing ferulic acid from methylferulate, and from the more natural substrates wheat bran, corn fiber, and XOS(FA,Ac), a corn fiber-derived substrate enriched in O-acetyl and ferulic acid esters. Exhibits negligible acetyl esterase activity on sugar acetates. Acts synergistically with Xyl3A to increase the release of xylose from xylan. Does not possess endoglucanase or mannanase activities since it is not able to hydrolyze carboxymethyl cellulose and locust bean gum. The protein is Endo-1,4-beta-xylanase/feruloyl esterase of Xylanibacter ruminicola (strain ATCC 19189 / DSM 19721 / CIP 105475 / JCM 8958 / 23) (Prevotella ruminicola).